The primary structure comprises 208 residues: 3-demethoxyubiquinol 3-hydroxylase (208 aa).

Fe cation contacts are provided by glutamate 57, glutamate 87, histidine 90, glutamate 139, glutamate 171, and histidine 174.

The protein belongs to the COQ7 family. Requires Fe cation as cofactor.

The protein resides in the cell membrane. It carries out the reaction a 5-methoxy-2-methyl-3-(all-trans-polyprenyl)benzene-1,4-diol + AH2 + O2 = a 3-demethylubiquinol + A + H2O. It functions in the pathway cofactor biosynthesis; ubiquinone biosynthesis. Catalyzes the hydroxylation of 2-nonaprenyl-3-methyl-6-methoxy-1,4-benzoquinol during ubiquinone biosynthesis. This is 3-demethoxyubiquinol 3-hydroxylase from Burkholderia multivorans (strain ATCC 17616 / 249).